We begin with the raw amino-acid sequence, 170 residues long: Peptide methionine sulfoxide reductase MsrA (170 aa).

C13 is an active-site residue.

The protein belongs to the MsrA Met sulfoxide reductase family.

It carries out the reaction L-methionyl-[protein] + [thioredoxin]-disulfide + H2O = L-methionyl-(S)-S-oxide-[protein] + [thioredoxin]-dithiol. The enzyme catalyses [thioredoxin]-disulfide + L-methionine + H2O = L-methionine (S)-S-oxide + [thioredoxin]-dithiol. Has an important function as a repair enzyme for proteins that have been inactivated by oxidation. Catalyzes the reversible oxidation-reduction of methionine sulfoxide in proteins to methionine. The chain is Peptide methionine sulfoxide reductase MsrA from Nocardia farcinica (strain IFM 10152).